The following is a 392-amino-acid chain: MMQGRDPKRKIFLIATEESGDRLGSALMKVLRQRLGDGVQFEGVGGRTMAREGLETLFPIEELSIVGFAAVVQQLPKILRLIRETADAVLEAVPDALVIIDSPDFTHRVARRVRARNPAIPIVDYVSPQLWAWRPGRARTMLGYVDHVLGLLPFEPEEYRKLGGPPCSYVGHPLIEQLGSLRPNAEEQKRRNSELPVLLVLPGSRRSEIRHHIEVFGAALGRLQAEGRAFELMLPTMPHLEATVREGIASWPVKPQIVIGEAEKRAAFRIAHAALAKSGTVTLELALSGIPMVTAYRVGAIEAFILRRAIRVSSVILANLVIGEDVIPEFLQEDCTPEKLAPALSEVLTDSDMRRRQVEAFARLDTIMSTGNKAPSVLAADIVLATMRKGRR.

Belongs to the LpxB family.

It catalyses the reaction a lipid X + a UDP-2-N,3-O-bis[(3R)-3-hydroxyacyl]-alpha-D-glucosamine = a lipid A disaccharide + UDP + H(+). It functions in the pathway bacterial outer membrane biogenesis; LPS lipid A biosynthesis. Its function is as follows. Condensation of UDP-2,3-diacylglucosamine and 2,3-diacylglucosamine-1-phosphate to form lipid A disaccharide, a precursor of lipid A, a phosphorylated glycolipid that anchors the lipopolysaccharide to the outer membrane of the cell. The protein is Lipid-A-disaccharide synthase of Bradyrhizobium diazoefficiens (strain JCM 10833 / BCRC 13528 / IAM 13628 / NBRC 14792 / USDA 110).